A 624-amino-acid polypeptide reads, in one-letter code: Kelch-like protein diablo (624 aa).

The span at 1–21 (MGDPLLPGSTGLGSGPAAAAT) shows a compositional bias: low complexity. The interval 1–55 (MGDPLLPGSTGLGSGPAAAATGGSGTTGTGLGSGGTSGAERPPSPARLTHTSEKH) is disordered. Residues 22–37 (GGSGTTGTGLGSGGTS) show a composition bias toward gly residues. The BTB domain maps to 73–140 (CDVVLNVGGR…CYTAHIIVEE (68 aa)). The BACK domain occupies 175–277 (CLGIRAFADT…SPKFLVGTVG (103 aa)). Kelch repeat units follow at residues 324-370 (VLFA…VLND), 372-418 (LYAV…VLDG), 419-465 (FLYA…VLSG), 467-512 (LYAI…VFNN), 514-559 (IYAV…VVNG), and 560-606 (QLYA…VMRA).

The protein operates within protein modification; protein ubiquitination. In terms of biological role, probable substrate-specific adapter of an E3 ubiquitin-protein ligase complex which mediates the ubiquitination and subsequent proteasomal degradation of target proteins. May have a role in synapse differentiation and growth. The chain is Kelch-like protein diablo from Drosophila virilis (Fruit fly).